The following is a 223-amino-acid chain: MITKLPQVLSPIQVASIIQLIEHGSFNSGKDTAGWHAKAVKNNLQWQGETELNEQIQTGIQGALTQHPQFTGAAYAKSMMPFIISESTLGGGYGDHIDDALMVNETVLRTDISCTLFLTPPQDYEGGELVMNLSGMEMAFKLNAGDAIIYPSTTLHRVNPVTSGSRKVALTWIESHIPQASQREILFDLDCARKDIMEHHGKTDAFDRITKTHANLLRQWAMT.

One can recognise a Fe2OG dioxygenase domain in the interval 77–175 (KSMMPFIISE…RKVALTWIES (99 aa)). His-96, Asp-98, and His-156 together coordinate Fe cation. Arg-166 is a binding site for 2-oxoglutarate.

The cofactor is Fe(2+). It depends on L-ascorbate as a cofactor.

This is PKHD-type hydroxylase CPS_3426 from Colwellia psychrerythraea (strain 34H / ATCC BAA-681) (Vibrio psychroerythus).